Reading from the N-terminus, the 1077-residue chain is Response regulator SSK1 (1077 aa).

The 147-residue stretch at 854–1000 (NVLIVEDNII…FLERKVMEWG (147 aa)) folds into the Response regulatory domain. A 4-aspartylphosphate modification is found at D903.

It belongs to the SSK1 family.

It is found in the cytoplasm. In terms of biological role, two-domain response regulator protein in the two-component signal transduction system of the HOG1 pathway. Involved in multi-stress responses and is essential for conidiation, secondary metabolism, autophagy and endocyrosis. In addition, regulates mycelial growth, cell nucleus development, septum formation, and organelle development. Also regulates trap formation and thus plays a crucial role in pathogenicity. The chain is Response regulator SSK1 from Arthrobotrys oligospora (strain ATCC 24927 / CBS 115.81 / DSM 1491) (Nematode-trapping fungus).